We begin with the raw amino-acid sequence, 510 residues long: 2,3-bisphosphoglycerate-independent phosphoglycerate mutase (510 aa).

Residues Asp14 and Ser64 each coordinate Mn(2+). The active-site Phosphoserine intermediate is Ser64. Substrate contacts are provided by residues His125, 155–156 (RD), Arg187, Arg193, 259–262 (RADR), and Lys332. Mn(2+)-binding residues include Asp399, His403, Asp440, His441, and His459.

Belongs to the BPG-independent phosphoglycerate mutase family. In terms of assembly, monomer. Mn(2+) serves as cofactor.

The enzyme catalyses (2R)-2-phosphoglycerate = (2R)-3-phosphoglycerate. The protein operates within carbohydrate degradation; glycolysis; pyruvate from D-glyceraldehyde 3-phosphate: step 3/5. Catalyzes the interconversion of 2-phosphoglycerate and 3-phosphoglycerate. This chain is 2,3-bisphosphoglycerate-independent phosphoglycerate mutase, found in Ectopseudomonas mendocina (strain ymp) (Pseudomonas mendocina).